The primary structure comprises 545 residues: T-complex protein 1 subunit gamma (545 aa).

Position 1 is an N-acetylmethionine (Met-1). The segment at 1 to 24 (MMGHRPVLVLSQNTKRESGRKVQS) is disordered. Phosphoserine is present on Ser-11. Residue Lys-15 forms a Glycyl lysine isopeptide (Lys-Gly) (interchain with G-Cter in SUMO2) linkage. ADP is bound at residue Gly-42. An ATP-binding site is contributed by Gly-42. Position 93 (Asp-93) interacts with Mg(2+). Gly-94, Thr-95, Thr-96, Ser-97, Thr-162, and Lys-163 together coordinate ADP. 3 residues coordinate ATP: Gly-94, Thr-95, and Thr-96. Position 170 is a phosphoserine (Ser-170). Lys-222 is subject to N6-acetyllysine. 2 positions are modified to phosphoserine: Ser-243 and Ser-244. Position 247 is a phosphotyrosine (Tyr-247). Residues Lys-248 and Lys-249 each participate in a glycyl lysine isopeptide (Lys-Gly) (interchain with G-Cter in SUMO2) cross-link. Phosphoserine is present on Ser-252. A disulfide bond links Cys-366 and Cys-372. Lys-381 is covalently cross-linked (Glycyl lysine isopeptide (Lys-Gly) (interchain with G-Cter in SUMO2)). Gly-411 serves as a coordination point for ADP. ATP is bound at residue Gly-411. Thr-430 and Thr-459 each carry phosphothreonine. ADP-binding residues include Gly-482, Glu-483, Glu-497, and Lys-502. Gly-482 lines the ATP pocket. Residue Glu-497 coordinates ATP. Positions 526 to 545 (HKKKGDDQSRQGGAPDAGQE) are disordered.

This sequence belongs to the TCP-1 chaperonin family. As to quaternary structure, component of the chaperonin-containing T-complex (TRiC), a hexadecamer composed of two identical back-to-back stacked rings enclosing a protein folding chamber. Each ring is made up of eight different subunits: TCP1/CCT1, CCT2, CCT3, CCT4, CCT5, CCT6A/CCT6, CCT7, CCT8. Interacts with PACRG. Interacts with DNAAF4. Interacts with DLEC1.

The protein localises to the cytoplasm. It carries out the reaction ATP + H2O = ADP + phosphate + H(+). Its function is as follows. Component of the chaperonin-containing T-complex (TRiC), a molecular chaperone complex that assists the folding of actin, tubulin and other proteins upon ATP hydrolysis. The TRiC complex mediates the folding of WRAP53/TCAB1, thereby regulating telomere maintenance. As part of the TRiC complex may play a role in the assembly of BBSome, a complex involved in ciliogenesis regulating transports vesicles to the cilia. The protein is T-complex protein 1 subunit gamma (CCT3) of Bos taurus (Bovine).